Here is a 120-residue protein sequence, read N- to C-terminus: Large ribosomal subunit protein uL18 (120 aa).

Belongs to the universal ribosomal protein uL18 family. Part of the 50S ribosomal subunit; part of the 5S rRNA/L5/L18/L25 subcomplex. Contacts the 5S and 23S rRNAs.

This is one of the proteins that bind and probably mediate the attachment of the 5S RNA into the large ribosomal subunit, where it forms part of the central protuberance. The polypeptide is Large ribosomal subunit protein uL18 (Macrococcus caseolyticus (strain JCSC5402) (Macrococcoides caseolyticum)).